Here is a 492-residue protein sequence, read N- to C-terminus: Glutamyl-tRNA(Gln) amidotransferase subunit A (492 aa).

Active-site charge relay system residues include K78 and S158. The active-site Acyl-ester intermediate is S182.

The protein belongs to the amidase family. GatA subfamily. As to quaternary structure, heterotrimer of A, B and C subunits.

It carries out the reaction L-glutamyl-tRNA(Gln) + L-glutamine + ATP + H2O = L-glutaminyl-tRNA(Gln) + L-glutamate + ADP + phosphate + H(+). Functionally, allows the formation of correctly charged Gln-tRNA(Gln) through the transamidation of misacylated Glu-tRNA(Gln) in organisms which lack glutaminyl-tRNA synthetase. The reaction takes place in the presence of glutamine and ATP through an activated gamma-phospho-Glu-tRNA(Gln). The chain is Glutamyl-tRNA(Gln) amidotransferase subunit A from Rhodopseudomonas palustris (strain HaA2).